Here is a 418-residue protein sequence, read N- to C-terminus: Tryptophan synthase beta chain (418 aa).

A compositionally biased stretch (polar residues) spans 1 to 18 (MTSTLPKASQPDPSSLQP). The disordered stretch occupies residues 1 to 28 (MTSTLPKASQPDPSSLQPSARPGAHGRF). Lys111 is modified (N6-(pyridoxal phosphate)lysine).

The protein belongs to the TrpB family. Tetramer of two alpha and two beta chains. Pyridoxal 5'-phosphate is required as a cofactor.

It catalyses the reaction (1S,2R)-1-C-(indol-3-yl)glycerol 3-phosphate + L-serine = D-glyceraldehyde 3-phosphate + L-tryptophan + H2O. It participates in amino-acid biosynthesis; L-tryptophan biosynthesis; L-tryptophan from chorismate: step 5/5. Functionally, the beta subunit is responsible for the synthesis of L-tryptophan from indole and L-serine. This Synechococcus sp. (strain CC9902) protein is Tryptophan synthase beta chain.